The chain runs to 1003 residues: Leucine-rich repeat receptor-like serine/threonine-protein kinase BAM1 (1003 aa).

The N-terminal stretch at 1–19 (MKLFLLLLFLLHISHTFTA) is a signal peptide. At 20–640 (SRPISEFRAL…HSKGPLSASM (621 aa)) the chain is on the extracellular side. 22 LRR repeats span residues 68-92 (RRHV…VSHL), 93-116 (RLLQ…ISSL), 117-140 (SGLR…ISSG), 142-165 (VNLR…VTNL), 166-191 (TQLR…SWPV), 193-213 (EYLA…IGNL), 215-238 (TLRE…IGNL), 239-262 (SELV…IGKL), 263-285 (QKLD…ELGT), 286-310 (LSSL…FAEL), 312-334 (NLTL…IGDL), 335-358 (PELE…LGEN), 359-382 (GKLN…MCSG), 385-406 (LETL…LGKC), 407-430 (ESLT…LFGL), 432-454 (KLTQ…GGVS), 455-480 (VNLG…NFTG), 482-502 (QKLL…VGKL), 503-526 (QQLS…ISRC), 527-550 (KLLT…ITAM), 551-574 (KILN…ISSM), and 575-598 (QSLT…GQFS). Asn-80, Asn-97, Asn-123, Asn-130, Asn-153, and Asn-164 each carry an N-linked (GlcNAc...) asparagine glycan. N-linked (GlcNAc...) asparagine glycans are attached at residues Asn-212 and Asn-237. Residues Asn-312 and Asn-346 are each glycosylated (N-linked (GlcNAc...) asparagine). Asn-420 is a glycosylation site (N-linked (GlcNAc...) asparagine). The N-linked (GlcNAc...) asparagine glycan is linked to Asn-477. 3 N-linked (GlcNAc...) asparagine glycosylation sites follow: Asn-557, Asn-586, and Asn-601. Residues 641–661 (KLLLVLGLLVCSIAFAVVAII) traverse the membrane as a helical segment. The Cytoplasmic portion of the chain corresponds to 662–1003 (KARSLKKASE…VQSPPDLLNL (342 aa)). Phosphothreonine is present on Thr-686. The Protein kinase domain occupies 694–971 (LKEDNIIGKG…VQILTEIPKL (278 aa)). Residues 700-708 (IGKGGAGIV) and Lys-722 contribute to the ATP site. Phosphotyrosine is present on residues Tyr-769 and Tyr-807. Asp-820 (proton acceptor) is an active-site residue. A Phosphoserine modification is found at Ser-855. A phosphotyrosine mark is found at Tyr-863 and Tyr-870. Residue Thr-871 is modified to Phosphothreonine. Residues 969 to 1003 (PKLPPSKDQPMTESAPESELSPKSGVQSPPDLLNL) form a disordered region. A Phosphoserine modification is found at Ser-996.

The protein belongs to the protein kinase superfamily. Ser/Thr protein kinase family. In terms of assembly, self-interacts and interacts with BAM2 and CLV1. Binds to the CLV3, CLE5, CLE11, CLE18, CLE19, CLE22, CLE25, CLE26, CLE40, CLE41 and CLE42 mature peptides, probably via its extracellular leucine-rich repeat region. In terms of tissue distribution, expressed in seedlings, roots, leaves, inflorescences, flowers and siliques.

The protein localises to the cell membrane. The catalysed reaction is L-seryl-[protein] + ATP = O-phospho-L-seryl-[protein] + ADP + H(+). It catalyses the reaction L-threonyl-[protein] + ATP = O-phospho-L-threonyl-[protein] + ADP + H(+). In terms of biological role, necessary for male gametophyte development, as well as ovule specification and function. Involved in cell-cell communication process required during early anther development, and regulating cell division and differentiation to organize cell layers. Required for the development of high-ordered vascular strands within the leaf and a correlated control of leaf shape, size and symmetry. May regulate the CLV1-dependent CLV3-mediated signaling in meristems maintenance. The sequence is that of Leucine-rich repeat receptor-like serine/threonine-protein kinase BAM1 (BAM1) from Arabidopsis thaliana (Mouse-ear cress).